Here is a 200-residue protein sequence, read N- to C-terminus: Small ribosomal subunit protein uS4 (200 aa).

The interval 22–41 (TGKEIEKRPYAPGQHGPNQR) is disordered. One can recognise an S4 RNA-binding domain in the interval 92–152 (TRLDNLVYRL…EKSQNLAVVG (61 aa)).

This sequence belongs to the universal ribosomal protein uS4 family. In terms of assembly, part of the 30S ribosomal subunit. Contacts protein S5. The interaction surface between S4 and S5 is involved in control of translational fidelity.

Its function is as follows. One of the primary rRNA binding proteins, it binds directly to 16S rRNA where it nucleates assembly of the body of the 30S subunit. With S5 and S12 plays an important role in translational accuracy. The protein is Small ribosomal subunit protein uS4 of Lysinibacillus sphaericus (strain C3-41).